We begin with the raw amino-acid sequence, 257 residues long: 3-methyl-2-oxobutanoate hydroxymethyltransferase (257 aa).

2 residues coordinate Mg(2+): aspartate 42 and aspartate 86. 3-methyl-2-oxobutanoate-binding positions include 42–43 (DS), aspartate 86, and lysine 116. Glutamate 118 is a Mg(2+) binding site. Glutamate 185 (proton acceptor) is an active-site residue.

It belongs to the PanB family. Homodecamer; pentamer of dimers. Requires Mg(2+) as cofactor.

It is found in the cytoplasm. The catalysed reaction is 3-methyl-2-oxobutanoate + (6R)-5,10-methylene-5,6,7,8-tetrahydrofolate + H2O = 2-dehydropantoate + (6S)-5,6,7,8-tetrahydrofolate. It participates in cofactor biosynthesis; (R)-pantothenate biosynthesis; (R)-pantoate from 3-methyl-2-oxobutanoate: step 1/2. Functionally, catalyzes the reversible reaction in which hydroxymethyl group from 5,10-methylenetetrahydrofolate is transferred onto alpha-ketoisovalerate to form ketopantoate. The polypeptide is 3-methyl-2-oxobutanoate hydroxymethyltransferase (Prochlorococcus marinus subsp. pastoris (strain CCMP1986 / NIES-2087 / MED4)).